An 802-amino-acid chain; its full sequence is Oligophrenin-1 (802 aa).

One can recognise a PH domain in the interval 265–368 (QPTIEGYLYT…WMEAMDGKEP (104 aa)). Positions 380–564 (MELNEVGFKF…ILIEHFGKIY (185 aa)) constitute a Rho-GAP domain. Disordered stretches follow at residues 641 to 663 (QKSGEMDPGRKSPSRPVSDCQTE) and 682 to 802 (TKAI…GDES). Positions 716 to 732 (HHKEGDTDCFSKVRPPG) are enriched in basic and acidic residues. A compositionally biased stretch (polar residues) spans 751 to 768 (SSTSQKPESKPETVSSNA).

As to quaternary structure, interacts with HOMER1. Interacts with AMPA receptor complexes. Interacts with SH3GL2 (endophilin-A1). Interacts (via C-terminus) with NR1D1. As to expression, high expression in brain, particularly in the cerebellum, hippocampus, thalamus, frontal lobes, sensory cortex. Found in the myelin sheaths of peripheral nerves, chromaffin cells within the adrenal medulla, and in extra-adrenal chromaffin cells associated with celiac ganglia.

The protein localises to the postsynapse. The protein resides in the presynapse. It is found in the cell projection. It localises to the axon. Its subcellular location is the dendritic spine. The protein localises to the dendrite. The protein resides in the cytoplasm. Its function is as follows. Stimulates GTP hydrolysis of members of the Rho family. Its action on RHOA activity and signaling is implicated in growth and stabilization of dendritic spines, and therefore in synaptic function, in hippocampal neurons. Critical for the stabilization of AMPA receptors at postsynaptic sites. Critical for the regulation of synaptic vesicle endocytosis at pre-synaptic terminals. Required for the localization of NR1D1 to dendrites, can suppress its repressor activity and protect it from proteasomal degradation. In Rattus norvegicus (Rat), this protein is Oligophrenin-1 (Ophn1).